The following is a 235-amino-acid chain: MELATELKEGILLVDKPQGRTSFSLIRTLTKLIGVKKIGHAGTLDPFATGVMVMLIGRKFTRLSDVLLFEDKEYAAIAHLGTTTDSYDCDGKIVGRSKKVPTYEEILEAALYFQGEIQQIPPMFSAKKINGKKLYEYARQGLSIERRQSTVQVSLQITKYEYPLLYFSVQCSKGTYIRSIAHELGNMLGCGAYLEELRRLRSGSFSIDQCIDGCLLDRPDFDVSPYLRDFNGNIL.

Asp-45 (nucleophile) is an active-site residue.

It belongs to the pseudouridine synthase TruB family. Type 1 subfamily.

The enzyme catalyses uridine(55) in tRNA = pseudouridine(55) in tRNA. In terms of biological role, responsible for synthesis of pseudouridine from uracil-55 in the psi GC loop of transfer RNAs. This Chlamydia felis (strain Fe/C-56) (Chlamydophila felis) protein is tRNA pseudouridine synthase B.